We begin with the raw amino-acid sequence, 76 residues long: Conotoxin Vc6.9 (76 aa).

The first 19 residues, 1 to 19 (MEKLTILLLVAAVLMSTQA), serve as a signal peptide directing secretion. The propeptide occupies 20 to 41 (LMQEQRQKAKINLFSKRKPSAE). Cystine bridges form between Cys49–Cys63, Cys56–Cys67, and Cys62–Cys72.

It belongs to the conotoxin O2 superfamily. Expressed by the venom duct.

It localises to the secreted. Inhibits voltage-gated ion channels. The sequence is that of Conotoxin Vc6.9 from Conus victoriae (Queen Victoria cone).